The primary structure comprises 570 residues: Peptidyl-prolyl cis-trans isomerase FKBP9 (570 aa).

An N-terminal signal peptide occupies residues 1-24; sequence MALGARGWRRRSLLLLLLWVTGQA. 4 PPIase FKBP-type domains span residues 54 to 142, 166 to 254, 278 to 365, and 389 to 477; these read GDFV…VDIW, SDFV…LDLH, GDFL…IDFH, and GDYL…LELV. N-linked (GlcNAc...) asparagine glycans are attached at residues Asn-174, Asn-286, Asn-302, and Asn-397. 2 consecutive EF-hand domains span residues 488 to 523 and 533 to 568; these read WNGE…QVAT and NAEM…AKHD. 10 residues coordinate Ca(2+): Asp-501, Asp-503, Asn-505, Glu-507, Glu-512, Asp-546, Asn-548, Asp-550, Lys-552, and Glu-557. Positions 567 to 570 match the Prevents secretion from ER motif; that stretch reads HDEL.

Post-translationally, phosphorylated. In terms of tissue distribution, predominantly expressed in heart, skeletal muscle, lung, liver and kidney. Lower levels found in brain, spleen and testis.

Its subcellular location is the endoplasmic reticulum lumen. The catalysed reaction is [protein]-peptidylproline (omega=180) = [protein]-peptidylproline (omega=0). With respect to regulation, inhibited by FK506. In terms of biological role, PPIases accelerate the folding of proteins during protein synthesis. This Mus musculus (Mouse) protein is Peptidyl-prolyl cis-trans isomerase FKBP9 (Fkbp9).